The sequence spans 432 residues: MLETHQAPDRAILLQALEPKVTRDACQRLLDELVHLSTTAGLEVHATQLLSLQKAVPATYFGSGQVEELARRIEEDEIDVAVVNHALTPIQQRNLEKKLNAKVVDRTGLILEIFAARARTREGIMQVELASLMYQQSRLVRSWTHLERQRGGVGLRGGPGERQIEVDRRLIRERIHKLKKQLEEVERTRALQRQPRQDIPLFTVALVGYTNAGKSTLFNLLTRAGVLAEDKLFATLDPTMRAVDLPDGGRILLSDTVGFIRQLPHQLVAAFKATLEEVMSADMLLHVVDLSDPEWERYVESVNGVLQELEVQHTRTLTVYNKIDRLESRGILERELARGDTIGVSAQTGEGVEPLLSELRRAVGRAMLRYEVILPVSDGRWLAKFHAEASVVEVREGEDFTTLIVELAPAVLGRLQGEVEREGVEVQFRPVD.

The region spanning 202–367 is the Hflx-type G domain; it reads FTVALVGYTN…ELRRAVGRAM (166 aa). GTP is bound by residues 208-215, 233-237, 255-258, 321-324, and 345-347; these read GYTNAGKS, FATLD, DTVG, NKID, and SAQ. Positions 215 and 235 each coordinate Mg(2+).

Belongs to the TRAFAC class OBG-HflX-like GTPase superfamily. HflX GTPase family. In terms of assembly, monomer. Associates with the 50S ribosomal subunit. The cofactor is Mg(2+).

Its subcellular location is the cytoplasm. Its function is as follows. GTPase that associates with the 50S ribosomal subunit and may have a role during protein synthesis or ribosome biogenesis. This chain is GTPase HflX, found in Magnetococcus marinus (strain ATCC BAA-1437 / JCM 17883 / MC-1).